A 260-amino-acid chain; its full sequence is Flagellar basal-body rod protein FlgG (260 aa).

Belongs to the flagella basal body rod proteins family. In terms of assembly, the basal body constitutes a major portion of the flagellar organelle and consists of four rings (L,P,S, and M) mounted on a central rod. The rod consists of about 26 subunits of FlgG in the distal portion, and FlgB, FlgC and FlgF are thought to build up the proximal portion of the rod with about 6 subunits each.

It is found in the bacterial flagellum basal body. In Escherichia coli O157:H7, this protein is Flagellar basal-body rod protein FlgG (flgG).